Here is a 343-residue protein sequence, read N- to C-terminus: Flagellar motor switch protein FliG (343 aa).

A Part of the EHPQR-motif motif is present at residues 137–140 (EHPQ). The M-F-X-F motif; its intrinsic flexibility is probably coupled to flagellar rotation signature appears at 245 to 248 (MFTF).

It belongs to the FliG family.

The protein localises to the cell inner membrane. It is found in the bacterial flagellum basal body. One of the proteins that forms a switch complex that is proposed to be located at the base of the basal body. This complex interacts with chemotaxis proteins (such as CheY) in addition to contacting components of the motor that determine the direction of flagellar rotation. Required for flagellum synthesis and motility. In H.pylori four flagellar switch proteins are encoded, FliG, FliM, FliN and FliY. This Helicobacter pylori (strain ATCC 700392 / 26695) (Campylobacter pylori) protein is Flagellar motor switch protein FliG.